A 38-amino-acid polypeptide reads, in one-letter code: Photosystem I reaction center subunit IX (38 aa).

Residues 4 to 24 (FLTTAPVVAAIWFTLTAGILI) form a helical membrane-spanning segment.

This sequence belongs to the PsaJ family.

It is found in the cellular thylakoid membrane. In terms of biological role, may help in the organization of the PsaE and PsaF subunits. The protein is Photosystem I reaction center subunit IX of Parasynechococcus marenigrum (strain WH8102).